The chain runs to 355 residues: Putative testis-specific Y-encoded-like protein 3 (355 aa).

Residues 1–131 (MADKRAGTPE…GEEKQEVAAE (131 aa)) are disordered. The segment covering 93–128 (ASEKAEDANKEEGAIFKKEPAEEVEKQQEGEEKQEV) has biased composition (basic and acidic residues).

It belongs to the nucleosome assembly protein (NAP) family.

The chain is Putative testis-specific Y-encoded-like protein 3 (TSPY26P) from Homo sapiens (Human).